A 340-amino-acid polypeptide reads, in one-letter code: Histidinol-phosphate aminotransferase (340 aa).

Lys204 carries the post-translational modification N6-(pyridoxal phosphate)lysine.

This sequence belongs to the class-II pyridoxal-phosphate-dependent aminotransferase family. Histidinol-phosphate aminotransferase subfamily. Pyridoxal 5'-phosphate is required as a cofactor.

It catalyses the reaction L-histidinol phosphate + 2-oxoglutarate = 3-(imidazol-4-yl)-2-oxopropyl phosphate + L-glutamate. It participates in amino-acid biosynthesis; L-histidine biosynthesis; L-histidine from 5-phospho-alpha-D-ribose 1-diphosphate: step 7/9. The polypeptide is Histidinol-phosphate aminotransferase (Thermococcus gammatolerans (strain DSM 15229 / JCM 11827 / EJ3)).